Reading from the N-terminus, the 173-residue chain is RNA pyrophosphohydrolase (173 aa).

A Nudix hydrolase domain is found at 13–166 (PYRPCVGLMI…KRKVYEEVVA (154 aa)). Residues 54-75 (GGIDKGEEPLQAAERELYEETG) carry the Nudix box motif.

It belongs to the Nudix hydrolase family. RppH subfamily. A divalent metal cation is required as a cofactor.

In terms of biological role, accelerates the degradation of transcripts by removing pyrophosphate from the 5'-end of triphosphorylated RNA, leading to a more labile monophosphorylated state that can stimulate subsequent ribonuclease cleavage. The chain is RNA pyrophosphohydrolase from Mesorhizobium japonicum (strain LMG 29417 / CECT 9101 / MAFF 303099) (Mesorhizobium loti (strain MAFF 303099)).